Here is a 417-residue protein sequence, read N- to C-terminus: Serine hydroxymethyltransferase (417 aa).

(6S)-5,6,7,8-tetrahydrofolate contacts are provided by residues Leu-121 and 125-127 (GHL). The residue at position 229 (Lys-229) is an N6-(pyridoxal phosphate)lysine. 355–357 (SPF) is a (6S)-5,6,7,8-tetrahydrofolate binding site.

It belongs to the SHMT family. Homodimer. The cofactor is pyridoxal 5'-phosphate.

It localises to the cytoplasm. The catalysed reaction is (6R)-5,10-methylene-5,6,7,8-tetrahydrofolate + glycine + H2O = (6S)-5,6,7,8-tetrahydrofolate + L-serine. It functions in the pathway one-carbon metabolism; tetrahydrofolate interconversion. It participates in amino-acid biosynthesis; glycine biosynthesis; glycine from L-serine: step 1/1. Its function is as follows. Catalyzes the reversible interconversion of serine and glycine with tetrahydrofolate (THF) serving as the one-carbon carrier. This reaction serves as the major source of one-carbon groups required for the biosynthesis of purines, thymidylate, methionine, and other important biomolecules. Also exhibits THF-independent aldolase activity toward beta-hydroxyamino acids, producing glycine and aldehydes, via a retro-aldol mechanism. This Xanthomonas campestris pv. campestris (strain 8004) protein is Serine hydroxymethyltransferase.